Consider the following 471-residue polypeptide: Glutamate--tRNA ligase (471 aa).

The 'HIGH' region motif lies at 9–19 (PSPTGYLHVGG). Residues 237–241 (KLSKR) carry the 'KMSKS' region motif. K240 provides a ligand contact to ATP.

The protein belongs to the class-I aminoacyl-tRNA synthetase family. Glutamate--tRNA ligase type 1 subfamily. As to quaternary structure, monomer.

It localises to the cytoplasm. The catalysed reaction is tRNA(Glu) + L-glutamate + ATP = L-glutamyl-tRNA(Glu) + AMP + diphosphate. Catalyzes the attachment of glutamate to tRNA(Glu) in a two-step reaction: glutamate is first activated by ATP to form Glu-AMP and then transferred to the acceptor end of tRNA(Glu). The polypeptide is Glutamate--tRNA ligase (Pectobacterium atrosepticum (strain SCRI 1043 / ATCC BAA-672) (Erwinia carotovora subsp. atroseptica)).